The following is a 287-amino-acid chain: Pantothenate synthetase (287 aa).

ATP is bound at residue 30-37 (MGNLHSGH). His37 serves as the catalytic Proton donor. Gln61 contributes to the (R)-pantoate binding site. Gln61 lines the beta-alanine pocket. ATP is bound at residue 149–152 (GEKD). Gln155 provides a ligand contact to (R)-pantoate. Residues Val178 and 186-189 (LSSR) contribute to the ATP site.

The protein belongs to the pantothenate synthetase family. As to quaternary structure, homodimer.

It is found in the cytoplasm. The catalysed reaction is (R)-pantoate + beta-alanine + ATP = (R)-pantothenate + AMP + diphosphate + H(+). It participates in cofactor biosynthesis; (R)-pantothenate biosynthesis; (R)-pantothenate from (R)-pantoate and beta-alanine: step 1/1. In terms of biological role, catalyzes the condensation of pantoate with beta-alanine in an ATP-dependent reaction via a pantoyl-adenylate intermediate. This Pseudomonas putida (strain W619) protein is Pantothenate synthetase.